Consider the following 373-residue polypeptide: Putative zinc finger protein 012R (373 aa).

A C2H2-type zinc finger spans residues 2–29 (FECTHCDLHFESKSKLATHQKTKKCTAH).

The protein belongs to the IIV-6 302L family.

In Invertebrate iridescent virus 3 (IIV-3), this protein is Putative zinc finger protein 012R.